Consider the following 432-residue polypeptide: Adenylosuccinate synthetase (432 aa).

GTP is bound by residues Gly12–Lys18 and Gly40–Thr42. The Proton acceptor role is filled by Asp13. Positions 13 and 40 each coordinate Mg(2+). IMP is bound by residues Asp13 to Lys16, Asn38 to His41, Thr130, Arg144, Gln225, Thr240, and Arg304. His41 serves as the catalytic Proton donor. Position 300–306 (Ser300–Arg306) interacts with substrate. Residues Arg306, Lys332–Asp334, and Ser414–Gly416 each bind GTP.

Belongs to the adenylosuccinate synthetase family. In terms of assembly, homodimer. Mg(2+) serves as cofactor.

The protein localises to the cytoplasm. It carries out the reaction IMP + L-aspartate + GTP = N(6)-(1,2-dicarboxyethyl)-AMP + GDP + phosphate + 2 H(+). The protein operates within purine metabolism; AMP biosynthesis via de novo pathway; AMP from IMP: step 1/2. Plays an important role in the de novo pathway of purine nucleotide biosynthesis. Catalyzes the first committed step in the biosynthesis of AMP from IMP. This Geobacter sp. (strain M21) protein is Adenylosuccinate synthetase.